Here is a 113-residue protein sequence, read N- to C-terminus: U11-theraphotoxin-Hhn1a (113 aa).

The first 21 residues, 1-21 (MNTVRVTFLPVFVLAVSLGQA), serve as a signal peptide directing secretion. Residues 22–74 (DKDENRMEMQEKTEQGKSYLDFAENLLLQKLEELEAKLLEEDSEESRNSRQKR) constitute a propeptide that is removed on maturation. Residues 61–83 (EEDSEESRNSRQKRCIGEGVPCD) are disordered. 3 disulfide bridges follow: Cys-75–Cys-90, Cys-82–Cys-95, and Cys-89–Cys-110.

The protein belongs to the neurotoxin 14 (magi-1) family. 01 (HNTX-16) subfamily. As to expression, expressed by the venom gland.

The protein resides in the secreted. This Cyriopagopus hainanus (Chinese bird spider) protein is U11-theraphotoxin-Hhn1a.